The chain runs to 304 residues: MARTHDDKWDLASSVGATATIVAAGRAMASRDPRGLIDDPFAEPLVRAVGVDFFIKMMDGEFDLSVLQNVSSAKAQAMVDGMAVRTKYFDDYFGDAIKSGIRQAVILASGLDARAYRLPWPADTVVYELDQPQVIEFKTNVLADLGAEPRATRRAIPIDLRGDWPVALRAAGLDTTAPTAWLAEGLLIYLPPEAQDRLFDNITALSAPGSTVATEFVPGIVDFDVDRARQMSGPFRDHGLDIDMSSLVYTGARNHVVDYLRAKGWDAEGVTRSKLFERNGMAVPAPSDDDPLGEIIFISAALTG.

Residues D130 and 159-160 (DL) contribute to the S-adenosyl-L-methionine site.

This sequence belongs to the UPF0677 family.

Exhibits S-adenosyl-L-methionine-dependent methyltransferase activity. This is Putative S-adenosyl-L-methionine-dependent methyltransferase MUL_0816 from Mycobacterium ulcerans (strain Agy99).